A 1401-amino-acid chain; its full sequence is Protein dispatched homolog 2 (1401 aa).

Disordered stretches follow at residues M1–A91 and D113–K138. Residues V170–G190 traverse the membrane as a helical segment. N-linked (GlcNAc...) asparagine glycosylation occurs at N239. The interval S241 to R264 is disordered. N-linked (GlcNAc...) asparagine glycans are attached at residues N349 and N465. Residues G471–L643 form the SSD domain. The next 11 helical transmembrane spans lie at F484–A504, L510–L530, F542–F562, F589–L609, C617–L637, Y704–S724, P964–W984, L990–L1010, A1019–S1039, A1064–L1084, and L1088–Q1108. 3 disordered regions span residues A1169 to L1192, P1229 to R1337, and S1352 to S1401. The span at S1175–K1184 shows a compositional bias: polar residues. Over residues P1259 to S1270 the composition is skewed to low complexity. A compositionally biased stretch (polar residues) spans S1284–P1305. Positions S1352 to S1362 are enriched in low complexity. R1366 bears the Omega-N-methylarginine mark.

It belongs to the dispatched family.

It is found in the membrane. This is Protein dispatched homolog 2 from Homo sapiens (Human).